The following is a 321-amino-acid chain: D-alanine--D-alanine ligase (321 aa).

The region spanning 121-315 (RIWFLTNNIN…FTNLIEEIIK (195 aa)) is the ATP-grasp domain. An ATP-binding site is contributed by 147–199 (PMKRPYVIKPLTQGSSIGVEVIFAEDDFNFADYDFPYGDQVIIEQYIKGRELQ). Residues glutamate 268, glutamate 282, and asparagine 284 each coordinate Mg(2+).

Belongs to the D-alanine--D-alanine ligase family. Requires Mg(2+) as cofactor. Mn(2+) is required as a cofactor.

It localises to the cytoplasm. It catalyses the reaction 2 D-alanine + ATP = D-alanyl-D-alanine + ADP + phosphate + H(+). The protein operates within cell wall biogenesis; peptidoglycan biosynthesis. Functionally, cell wall formation. In Rickettsia africae (strain ESF-5), this protein is D-alanine--D-alanine ligase.